Consider the following 415-residue polypeptide: Amylovoran biosynthesis protein AmsJ (415 aa).

The protein belongs to the polysaccharide pyruvyl transferase family.

It functions in the pathway glycan metabolism; exopolysaccharide biosynthesis. Functionally, involved in the biosynthesis of amylovoran which functions as a virulence factor. The polypeptide is Amylovoran biosynthesis protein AmsJ (amsJ) (Erwinia amylovora (Fire blight bacteria)).